A 646-amino-acid polypeptide reads, in one-letter code: 1-deoxy-D-xylulose-5-phosphate synthase (646 aa).

Thiamine diphosphate-binding positions include His-86 and 127–129; that span reads AHS. Position 158 (Asp-158) interacts with Mg(2+). Thiamine diphosphate is bound by residues 159-160, Asn-188, Tyr-295, and Glu-377; that span reads GA. Asn-188 contributes to the Mg(2+) binding site.

Belongs to the transketolase family. DXPS subfamily. Homodimer. Requires Mg(2+) as cofactor. It depends on thiamine diphosphate as a cofactor.

The catalysed reaction is D-glyceraldehyde 3-phosphate + pyruvate + H(+) = 1-deoxy-D-xylulose 5-phosphate + CO2. Its pathway is metabolic intermediate biosynthesis; 1-deoxy-D-xylulose 5-phosphate biosynthesis; 1-deoxy-D-xylulose 5-phosphate from D-glyceraldehyde 3-phosphate and pyruvate: step 1/1. Functionally, catalyzes the acyloin condensation reaction between C atoms 2 and 3 of pyruvate and glyceraldehyde 3-phosphate to yield 1-deoxy-D-xylulose-5-phosphate (DXP). The sequence is that of 1-deoxy-D-xylulose-5-phosphate synthase from Burkholderia cenocepacia (strain HI2424).